The following is a 39-amino-acid chain: Photosystem II reaction center protein X (39 aa).

The helical transmembrane segment at 10–30 threads the bilayer; that stretch reads SSLVWAAVIVVIPAAVALVLI.

It belongs to the PsbX family. Type 1 subfamily. In terms of assembly, PSII is composed of 1 copy each of membrane proteins PsbA, PsbB, PsbC, PsbD, PsbE, PsbF, PsbH, PsbI, PsbJ, PsbK, PsbL, PsbM, PsbT, PsbX, PsbY, Psb30/Ycf12, peripheral proteins PsbO, CyanoQ (PsbQ), PsbU, PsbV and a large number of cofactors. It forms dimeric complexes.

The protein localises to the cellular thylakoid membrane. Its function is as follows. Involved in the binding and/or turnover of quinones at the Q(B) site of photosystem II (PSII). PSII is a light-driven water plastoquinone oxidoreductase, using light energy to abstract electrons from H(2)O, generating a proton gradient subsequently used for ATP formation. In Prochlorococcus marinus (strain MIT 9303), this protein is Photosystem II reaction center protein X.